A 294-amino-acid polypeptide reads, in one-letter code: 33 kDa chaperonin (294 aa).

Intrachain disulfides connect Cys237/Cys239 and Cys270/Cys273.

Belongs to the HSP33 family. Post-translationally, under oxidizing conditions two disulfide bonds are formed involving the reactive cysteines. Under reducing conditions zinc is bound to the reactive cysteines and the protein is inactive.

The protein resides in the cytoplasm. Its function is as follows. Redox regulated molecular chaperone. Protects both thermally unfolding and oxidatively damaged proteins from irreversible aggregation. Plays an important role in the bacterial defense system toward oxidative stress. In Geobacillus kaustophilus (strain HTA426), this protein is 33 kDa chaperonin.